We begin with the raw amino-acid sequence, 300 residues long: Solute carrier family 25 member 35 (300 aa).

Solcar repeat units lie at residues Met-1–Arg-90, His-100–Leu-193, and Gln-203–Phe-294. Helical transmembrane passes span Thr-38–Gly-58, Leu-59–Ile-79, Gly-91–Leu-119, Ala-169–Ile-190, Trp-205–Pro-225, and Leu-277–Lys-300.

This sequence belongs to the mitochondrial carrier (TC 2.A.29) family.

It localises to the mitochondrion inner membrane. The catalysed reaction is a dicarboxylate(in) + sulfate(out) = a dicarboxylate(out) + sulfate(in). Functionally, putative antiporter that exchanges dicarboxylates and sulfur oxoanions across the inner membrane of mitochondria. In Mus musculus (Mouse), this protein is Solute carrier family 25 member 35 (Slc25a35).